The sequence spans 94 residues: Co-chaperonin GroES (94 aa).

This sequence belongs to the GroES chaperonin family. In terms of assembly, heptamer of 7 subunits arranged in a ring. Interacts with the chaperonin GroEL.

The protein resides in the cytoplasm. Together with the chaperonin GroEL, plays an essential role in assisting protein folding. The GroEL-GroES system forms a nano-cage that allows encapsulation of the non-native substrate proteins and provides a physical environment optimized to promote and accelerate protein folding. GroES binds to the apical surface of the GroEL ring, thereby capping the opening of the GroEL channel. This chain is Co-chaperonin GroES, found in Ehrlichia ruminantium (strain Gardel).